Here is a 241-residue protein sequence, read N- to C-terminus: MTFSRPSGRTADQLRPVRIERAFTRHAEGSVLVSFGDTRVLCTASVENRVPGFLRGKGEGWVTAEYGMLPRSTHTRSDREAARGKQGGRTLEIQRLIGRALRACVDRNALGERTITLDCDVLQADGGTRTAAITGAYVALADAVNLLIKRGDIKKHPLIGAVAAVSVGIYRGEPVLDLDYPEDSDCDTDMNVVMNDGGGFIELQGTAEGHAFRRDELNALLALAEKGMGELFALQRAALAG.

Residues arginine 89 and 127–129 (GTR) contribute to the phosphate site.

The protein belongs to the RNase PH family. In terms of assembly, homohexameric ring arranged as a trimer of dimers.

It catalyses the reaction tRNA(n+1) + phosphate = tRNA(n) + a ribonucleoside 5'-diphosphate. Phosphorolytic 3'-5' exoribonuclease that plays an important role in tRNA 3'-end maturation. Removes nucleotide residues following the 3'-CCA terminus of tRNAs; can also add nucleotides to the ends of RNA molecules by using nucleoside diphosphates as substrates, but this may not be physiologically important. Probably plays a role in initiation of 16S rRNA degradation (leading to ribosome degradation) during starvation. The protein is Ribonuclease PH of Xanthomonas euvesicatoria pv. vesicatoria (strain 85-10) (Xanthomonas campestris pv. vesicatoria).